Reading from the N-terminus, the 270-residue chain is MISITKDKRMLGYESLSSYSNISHFVTTRQGGCSEGNYASFNCTPYSGDEAEKVRRNQTLLMEGMSQIPEELVIPVQTHETNYLLIGDAYLSASSQQRQEMLHGVDALITREPGYCLCISTADCVPVLVYDKKHGAIAAIHAGWRGTVAYIVRDTLLRMEKEFGTSGEDVVACIGPSISLASFEVGEEVYEAFQKNGFDMPRISIRKEETGKHHIDLWEANRMQILAFGVPSGQVELARICTYIHHDEFFSARRLGIKSGRILSGIMIHK.

His-79, Cys-124, and His-141 together coordinate Zn(2+).

Belongs to the purine nucleoside phosphorylase YfiH/LACC1 family. Homodimer. It depends on Cu(2+) as a cofactor. Zn(2+) is required as a cofactor.

It carries out the reaction adenosine + phosphate = alpha-D-ribose 1-phosphate + adenine. The enzyme catalyses S-methyl-5'-thioadenosine + phosphate = 5-(methylsulfanyl)-alpha-D-ribose 1-phosphate + adenine. It catalyses the reaction inosine + phosphate = alpha-D-ribose 1-phosphate + hypoxanthine. The catalysed reaction is adenosine + H2O + H(+) = inosine + NH4(+). In terms of biological role, purine nucleoside enzyme that catalyzes the phosphorolysis of adenosine and inosine nucleosides, yielding D-ribose 1-phosphate and the respective free bases, adenine and hypoxanthine. Also catalyzes the phosphorolysis of S-methyl-5'-thioadenosine into adenine and S-methyl-5-thio-alpha-D-ribose 1-phosphate. Also has adenosine deaminase activity. The chain is Purine nucleoside phosphorylase BT_4389 from Bacteroides thetaiotaomicron (strain ATCC 29148 / DSM 2079 / JCM 5827 / CCUG 10774 / NCTC 10582 / VPI-5482 / E50).